Here is a 214-residue protein sequence, read N- to C-terminus: Small ribosomal subunit protein uS5 (214 aa).

The segment at 1–61 (MTDSSPQSNP…QERDSEWQER (61 aa)) is disordered. A compositionally biased stretch (low complexity) spans 9–29 (NPNAVPGAADVPAAAEGQQQQ). Basic and acidic residues predominate over residues 30–60 (EQRRGRGDRDGRRGDRRGGRRGQERDSEWQE). An S5 DRBM domain is found at 58–121 (WQERVVQIRR…ADGKKHLVKV (64 aa)).

This sequence belongs to the universal ribosomal protein uS5 family. Part of the 30S ribosomal subunit. Contacts proteins S4 and S8.

In terms of biological role, with S4 and S12 plays an important role in translational accuracy. Located at the back of the 30S subunit body where it stabilizes the conformation of the head with respect to the body. The chain is Small ribosomal subunit protein uS5 from Synechococcus sp. (strain CC9605).